Consider the following 469-residue polypeptide: Receptor-type adenylate cyclase (469 aa).

At 1–59 the chain is on the extracellular side; it reads VDTAEKLSKNGCASNYGATQISVWSMARALNASIPPLTNPMTPSMTFRNSNAGRISGVA. Asparagine 31 carries N-linked (GlcNAc...) asparagine glycosylation. The chain crosses the membrane as a helical span at residues 60 to 80; that stretch reads LVGVIIGGALALFLVVALGVV. Over 81-469 the chain is Cytoplasmic; that stretch reads PYFFLHNTRD…IDLENDSTTS (389 aa). One can recognise a Guanylate cyclase domain in the interval 103–257; sequence TLIFTDIESS…RTSNMAARTE (155 aa). The Mg(2+) site is built by aspartate 108 and aspartate 151.

The protein belongs to the adenylyl cyclase class-3 family. Mg(2+) is required as a cofactor.

It is found in the cell membrane. The catalysed reaction is ATP = 3',5'-cyclic AMP + diphosphate. Its function is as follows. Could act as a receptor for an unknown ligand. In Trypanosoma equiperdum, this protein is Receptor-type adenylate cyclase (ESAG4C).